Here is a 592-residue protein sequence, read N- to C-terminus: Tetrathionate sensor histidine kinase TtrS (592 aa).

2 helical membrane passes run 11 to 31 (VLAA…NIGI) and 307 to 327 (VGGV…VMLL). One can recognise a Histidine kinase domain in the interval 364–581 (GFAHELNQPL…VVTIHFLHEN (218 aa)). At H367 the chain carries Phosphohistidine; by autocatalysis.

Autophosphorylated.

It is found in the cell inner membrane. It catalyses the reaction ATP + protein L-histidine = ADP + protein N-phospho-L-histidine.. Member of the two-component regulatory system TtrR/TtrS, which is required for synthesis of tetrathionate reductase. Probably functions as a sensor protein kinase which is autophosphorylated at a histidine residue in response to tetrathionate, and transfers its phosphate group to TtrR. During mice infection, the ability to use tetrathionate as an electron acceptor is a growth advantage for S.typhimurium over the competing microbiota in the lumen of the inflamed gut. This is Tetrathionate sensor histidine kinase TtrS (ttrS) from Salmonella typhimurium (strain LT2 / SGSC1412 / ATCC 700720).